Here is a 131-residue protein sequence, read N- to C-terminus: MNLPSTKVSWAAVTLLLLLLLLPPALLSSGAAAQPLPDCCRQKTCSCRLYELLHGAGNHAAGILTLGKRRSGPPGLQGRLQRLLQASGNHAAGILTMGRRAGAEPAPRPCLGRRCSAPAAASVAPGGQSGI.

An N-terminal signal peptide occupies residues 1 to 33; the sequence is MNLPSTKVSWAAVTLLLLLLLLPPALLSSGAAA. A Pyrrolidone carboxylic acid modification is found at Gln34. Disulfide bonds link Cys39–Cys45 and Cys40–Cys47. Leu66 bears the Leucine amide mark. A Methionine amide modification is found at Met97. A propeptide spans 98–131 (removed in mature form); that stretch reads GRRAGAEPAPRPCLGRRCSAPAAASVAPGGQSGI.

This sequence belongs to the orexin family. Specific enzymatic cleavages at paired basic residues yield the different active peptides. Abundantly expressed in subthalamic nucleus but undetectable in other brain regions tested (hypothalamus was not tested) and in heart, placenta, lung, liver, skeletal muscle, kidney and pancreas.

The protein resides in the rough endoplasmic reticulum. It localises to the cytoplasmic vesicle. Its subcellular location is the synapse. Functionally, neuropeptides that play a significant role in the regulation of food intake and sleep-wakefulness, possibly by coordinating the complex behavioral and physiologic responses of these complementary homeostatic functions. A broader role in the homeostatic regulation of energy metabolism, autonomic function, hormonal balance and the regulation of body fluids, is also suggested. Its function is as follows. Binds to orexin receptors HCRTR1/OX1R and HCRTR2/OX2R with a high affinity. Stimulates food intake. Modulates pituitary luteinizing hormone secretion in an ovarian steroid-dependent manner. Binds to orexin receptor HCRTR2/OX2R only. Stimulates food intake. Modulates pituitary luteinizing hormone secretion in an ovarian steroid-dependent manner. The protein is Hypocretin neuropeptide precursor of Homo sapiens (Human).